Here is a 408-residue protein sequence, read N- to C-terminus: tRNA pseudouridine synthase D (408 aa).

Asp76 (nucleophile) is an active-site residue. In terms of domain architecture, TRUD spans 149–362 (GFINYYDSQR…NSFERKVRIL (214 aa)).

Belongs to the pseudouridine synthase TruD family.

It carries out the reaction uridine(13) in tRNA = pseudouridine(13) in tRNA. Functionally, responsible for synthesis of pseudouridine from uracil-13 in transfer RNAs. This chain is tRNA pseudouridine synthase D, found in Leptospira interrogans serogroup Icterohaemorrhagiae serovar Lai (strain 56601).